The following is a 274-amino-acid chain: Elongation factor Ts (274 aa).

The involved in Mg(2+) ion dislocation from EF-Tu stretch occupies residues 82 to 85; sequence TDFV.

The protein belongs to the EF-Ts family.

It is found in the cytoplasm. Its function is as follows. Associates with the EF-Tu.GDP complex and induces the exchange of GDP to GTP. It remains bound to the aminoacyl-tRNA.EF-Tu.GTP complex up to the GTP hydrolysis stage on the ribosome. This Christiangramia forsetii (strain DSM 17595 / CGMCC 1.15422 / KT0803) (Gramella forsetii) protein is Elongation factor Ts.